The sequence spans 540 residues: MAKMLKFGEDARRSMQVGVDKLADTVKVTLGPKGRNVVLDKKFGSPLITNDGVSIAREIELEDPYENMGAQLVKEVATKTNDVAGDGTTTATLLAQAIIREGLKNVTAGANPMLIRNGIRMAVDKAVEEIKKISKPVEGKEDIARVAAISAADEEIGKLIADAMEKVGNEGVITIEESKSMGTELDVVEGMQFDRGYVSPYMSTDTEKMEAILDTPYILITDKKITNIQEILPILEQIVQAGRKLLIIAEDIEGEAMATLVVNKLRGTFTCVAVKAPGFGDRRKEMLEDIAILTGGTVIAEELGRDLKEVTLDMLGQAESVKVSKDNTVVVNGKGNPENIKDRISQIKAQIEETSSEFDKEKLQERLAKLAGGVAVIKVGAATETELKERKLRIEDALAATKAAVEEGIVPGGGTAYINVIKEVEKLTSDVQDTELGIKIIVKSLEEPLRQIASNAGVEGSVIIEKVKNSEVGTGYDALYGKYVNMIKSGIVDPTKVTRSALQNAASVSATFLTTEAAVAEIPQKEPAMPAPGMGMDGMY.

Residues 29–32, 86–90, G413, 477–479, and D493 contribute to the ATP site; these read TLGP, DGTTT, and DAL.

The protein belongs to the chaperonin (HSP60) family. In terms of assembly, forms a cylinder of 14 subunits composed of two heptameric rings stacked back-to-back. Interacts with the co-chaperonin GroES.

The protein resides in the cytoplasm. It catalyses the reaction ATP + H2O + a folded polypeptide = ADP + phosphate + an unfolded polypeptide.. In terms of biological role, together with its co-chaperonin GroES, plays an essential role in assisting protein folding. The GroEL-GroES system forms a nano-cage that allows encapsulation of the non-native substrate proteins and provides a physical environment optimized to promote and accelerate protein folding. The sequence is that of Chaperonin GroEL from Clostridium botulinum (strain Eklund 17B / Type B).